The chain runs to 374 residues: Ras-related GTP-binding protein B (374 aa).

M1 bears the N-acetylmethionine mark. A compositionally biased stretch (basic and acidic residues) spans 1-15 (MEESDSEKKTEKENV). The interval 1 to 30 (MEESDSEKKTEKENVGPKVEPPLGEPEGSL) is disordered. GTP is bound by residues S49 and G50. The GDP site is built by G50, S51, G52, K53, T54, S55, T69, and T75. GTP contacts are provided by G52, K53, T54, S55, T69, T75, G126, and H188. Positions 188 and 191 each coordinate GDP. K203 is covalently cross-linked (Glycyl lysine isopeptide (Lys-Gly) (interchain with G-Cter in ubiquitin)). GDP-binding residues include L209 and I225. A GTP-binding site is contributed by I225. Glycyl lysine isopeptide (Lys-Gly) (interchain with G-Cter in ubiquitin) cross-links involve residues K281, K291, and K305.

It belongs to the GTR/RAG GTP-binding protein family. In terms of assembly, interacts with RRAGC and RRAGD; heterodimerization stabilizes RRAG proteins. The GTP-bound form of RRAGB (in complex with the GDP-bound form of RRAGC or RRAGD) interacts with RPTOR, thereby promoting recruitment of mTORC1 to the lysosomes. Component of the lysosomal folliculin complex (LFC), composed of FLCN, FNIP1 (or FNIP2), RagA/RRAGA or RagB/RRAGB GDP-bound, RagC/RRAGC or RagD/RRAGD GTP-bound, and Ragulator. Interacts with SH3BP4; the interaction with this negative regulator is most probably direct, preferentially occurs with the inactive GDP-bound form of RRAGB, is negatively regulated by amino acids and prevents interaction with RPTOR. Interacts with the GATOR1 complex; inactivates RRAGB. The Rag heterodimer interacts with SLC38A9; the probable amino acid sensor. Interacts with SESN1, SESN2 and SESN3.

Its subcellular location is the cytoplasm. It is found in the lysosome membrane. The enzyme catalyses GTP + H2O = GDP + phosphate + H(+). Its activity is regulated as follows. The activation of GTP-binding proteins is generally mediated by a guanine exchange factor (GEF), while inactivation through hydrolysis of bound GTP is catalyzed by a GTPase activating protein (GAP). The Ragulator complex functions as a GEF and promotes the active GTP-bound form. The GATOR1 complex functions as a GAP and stimulates RRAGB GTPase activity to turn it into its inactive GDP-bound form, preventing mTORC1 recruitment and activation. Functionally, guanine nucleotide-binding protein that plays a crucial role in the cellular response to amino acid availability through regulation of the mTORC1 signaling cascade. Forms heterodimeric Rag complexes with RagC/RRAGC or RagD/RRAGD and cycles between an inactive GDP-bound and an active GTP-bound form: RagB/RRAGB is in its active form when GTP-bound RagB/RRAGB forms a complex with GDP-bound RagC/RRAGC (or RagD/RRAGD) and in an inactive form when GDP-bound RagB/RRAGB heterodimerizes with GTP-bound RagC/RRAGC (or RagD/RRAGD). In its GTP-bound active form, promotes the recruitment of mTORC1 to the lysosomes and its subsequent activation by the GTPase RHEB. Involved in the RCC1/Ran-GTPase pathway. The polypeptide is Ras-related GTP-binding protein B (Mus musculus (Mouse)).